A 136-amino-acid chain; its full sequence is Ribonuclease VapC1 (136 aa).

The 112-residue stretch at 18–129 folds into the PINc domain; it reads ILVDTSVLID…KKHFERLKEF (112 aa). Residues aspartate 21 and aspartate 101 each coordinate Mg(2+).

It belongs to the PINc/VapC protein family. The cofactor is Mg(2+).

In terms of biological role, toxic component of a type II toxin-antitoxin (TA) system. An RNase. Its cognate antitoxin is VapB1. The protein is Ribonuclease VapC1 of Methanocaldococcus jannaschii (strain ATCC 43067 / DSM 2661 / JAL-1 / JCM 10045 / NBRC 100440) (Methanococcus jannaschii).